The primary structure comprises 357 residues: Alanine racemase (357 aa).

The active-site Proton acceptor; specific for D-alanine is the K34. An N6-(pyridoxal phosphate)lysine modification is found at K34. Position 127 (R127) interacts with substrate. Y252 serves as the catalytic Proton acceptor; specific for L-alanine. M301 is a substrate binding site.

The protein belongs to the alanine racemase family. Pyridoxal 5'-phosphate is required as a cofactor.

It carries out the reaction L-alanine = D-alanine. It functions in the pathway amino-acid biosynthesis; D-alanine biosynthesis; D-alanine from L-alanine: step 1/1. In terms of biological role, catalyzes the interconversion of L-alanine and D-alanine. May also act on other amino acids. The protein is Alanine racemase (alr) of Dichelobacter nodosus (strain VCS1703A).